We begin with the raw amino-acid sequence, 880 residues long: Envelope glycoprotein gp160 (880 aa).

A signal peptide spans 1–35 (MKAMETQRNCRTLSLKEIILCTLVLGIIGIIKCED). Residues 36 to 701 (NMWVTVYYGV…ITSWLWYIKI (666 aa)) are Extracellular-facing. Cysteine 57 and cysteine 77 form a disulfide bridge. Residues asparagine 91, asparagine 133, asparagine 145, asparagine 148, asparagine 157, asparagine 163, asparagine 173, asparagine 177, asparagine 221, asparagine 256, asparagine 265, asparagine 286, asparagine 299, asparagine 312, asparagine 318, asparagine 324, asparagine 356, asparagine 372, and asparagine 381 are each glycosylated (N-linked (GlcNAc...) asparagine; by host). Cystine bridges form between cysteine 122/cysteine 229, cysteine 129/cysteine 220, cysteine 134/cysteine 174, cysteine 242/cysteine 271, and cysteine 252/cysteine 263. The segment at 134–173 (CSLFKCIKENGNTTNCTVQISTGNDSTANNITVGTIDMYN) is V1. Residues 174–220 (CSFNATTELRDRKKQVYSLFYRQDLEPLEGNKPPEGDKNALYRLYNC) form a V2 region. The tract at residues 319 to 352 (CTRTGNNTIKGIPIGPSQIFYGIETVIGDTRQAF) is V3. A disulfide bridge connects residues cysteine 319 and cysteine 353. The CD4-binding loop stretch occupies residues 389–399 (STGGDLEVTNL). 2 disulfides stabilise this stretch: cysteine 403–cysteine 461 and cysteine 410–cysteine 434. A V4 region spans residues 410-434 (CNTSILFNTSIIFNETKDDNITIPC). Residues asparagine 411, asparagine 417, asparagine 423, asparagine 429, asparagine 464, and asparagine 479 are each glycosylated (N-linked (GlcNAc...) asparagine; by host). Residues 479–487 (NKSAMFTPV) form a V5 region. Residues 528–549 (AAVGLGALFLGFLGAAGSTMGA) are fusion peptide. Residues 591-609 (KQLQARVLAVERYLKDQQL) are immunosuppression. Cysteine 615 and cysteine 621 form a disulfide bridge. N-linked (GlcNAc...) asparagine; by host glycans are attached at residues asparagine 628, asparagine 633, asparagine 642, and asparagine 654. A coiled-coil region spans residues 650 to 684 (KEVSNYTDVIYNLLEKAQTQQENNEKELLELDKWA). The tract at residues 679–700 (ELDKWASLWNWFDITSWLWYIK) is MPER; binding to GalCer. Residues 702–722 (FIIIVGGLIGLRIVFALLSIV) traverse the membrane as a helical segment. The Cytoplasmic segment spans residues 723 to 880 (NRVRQGYSPL…IRQGLERALL (158 aa)). The YXXL motif; contains endocytosis signal signature appears at 729–732 (YSPL). Cysteine 781 carries S-palmitoyl cysteine; by host lipidation. A Di-leucine internalization motif motif is present at residues 879–880 (LL).

This sequence belongs to the HIV-1 env protein family. In terms of assembly, the mature envelope protein (Env) consists of a homotrimer of non-covalently associated gp120-gp41 heterodimers. The resulting complex protrudes from the virus surface as a spike. There seems to be as few as 10 spikes on the average virion. Interacts with host CD4, CCR5 and CXCR4. Gp120 also interacts with the C-type lectins CD209/DC-SIGN and CLEC4M/DC-SIGNR (collectively referred to as DC-SIGN(R)). Gp120 and gp41 interact with GalCer. Gp120 interacts with host ITGA4/ITGB7 complex; on CD4+ T-cells, this interaction results in rapid activation of integrin ITGAL/LFA-1, which facilitates efficient cell-to-cell spreading of HIV-1. Gp120 interacts with cell-associated heparan sulfate; this interaction increases virus infectivity on permissive cells and may be involved in infection of CD4- cells. The mature envelope protein (Env) consists of a homotrimer of non-covalently associated gp120-gp41 heterodimers. The resulting complex protrudes from the virus surface as a spike. There seems to be as few as 10 spikes on the average virion. Highly glycosylated by host. The high number of glycan on the protein is reffered to as 'glycan shield' because it contributes to hide protein sequence from adaptive immune system. In terms of processing, palmitoylation of the transmembrane protein and of Env polyprotein (prior to its proteolytic cleavage) is essential for their association with host cell membrane lipid rafts. Palmitoylation is therefore required for envelope trafficking to classical lipid rafts, but not for viral replication. Post-translationally, specific enzymatic cleavages in vivo yield mature proteins. Envelope glycoproteins are synthesized as an inactive precursor that is heavily N-glycosylated and processed likely by host cell furin in the Golgi to yield the mature SU and TM proteins. The cleavage site between SU and TM requires the minimal sequence [KR]-X-[KR]-R. About 2 of the 9 disulfide bonds of gp41 are reduced by P4HB/PDI, following binding to CD4 receptor.

It is found in the virion membrane. Its subcellular location is the host cell membrane. The protein resides in the host endosome membrane. Its function is as follows. Attaches the virus to the host lymphoid cell by binding to the primary receptor CD4. This interaction induces a structural rearrangement creating a high affinity binding site for a chemokine coreceptor like CXCR4 and/or CCR5. Acts as a ligand for CD209/DC-SIGN and CLEC4M/DC-SIGNR, which are respectively found on dendritic cells (DCs), and on endothelial cells of liver sinusoids and lymph node sinuses. These interactions allow capture of viral particles at mucosal surfaces by these cells and subsequent transmission to permissive cells. HIV subverts the migration properties of dendritic cells to gain access to CD4+ T-cells in lymph nodes. Virus transmission to permissive T-cells occurs either in trans (without DCs infection, through viral capture and transmission), or in cis (following DCs productive infection, through the usual CD4-gp120 interaction), thereby inducing a robust infection. In trans infection, bound virions remain infectious over days and it is proposed that they are not degraded, but protected in non-lysosomal acidic organelles within the DCs close to the cell membrane thus contributing to the viral infectious potential during DCs' migration from the periphery to the lymphoid tissues. On arrival at lymphoid tissues, intact virions recycle back to DCs' cell surface allowing virus transmission to CD4+ T-cells. Acts as a class I viral fusion protein. Under the current model, the protein has at least 3 conformational states: pre-fusion native state, pre-hairpin intermediate state, and post-fusion hairpin state. During fusion of viral and target intracellular membranes, the coiled coil regions (heptad repeats) assume a trimer-of-hairpins structure, positioning the fusion peptide in close proximity to the C-terminal region of the ectodomain. The formation of this structure appears to drive apposition and subsequent fusion of viral and target cell membranes. Complete fusion occurs in host cell endosomes and is dynamin-dependent, however some lipid transfer might occur at the plasma membrane. The virus undergoes clathrin-dependent internalization long before endosomal fusion, thus minimizing the surface exposure of conserved viral epitopes during fusion and reducing the efficacy of inhibitors targeting these epitopes. Membranes fusion leads to delivery of the nucleocapsid into the cytoplasm. Functionally, oligomerizes in the host endoplasmic reticulum into predominantly trimers. In a second time, gp160 transits in the host Golgi, where glycosylation is completed. The precursor is then proteolytically cleaved in the trans-Golgi and thereby activated by cellular furin or furin-like proteases to produce gp120 and gp41. This is Envelope glycoprotein gp160 from Pan troglodytes (Chimpanzee).